Reading from the N-terminus, the 359-residue chain is uncharacterized protein (359 aa).

This is an uncharacterized protein from Archaeoglobus fulgidus (strain ATCC 49558 / DSM 4304 / JCM 9628 / NBRC 100126 / VC-16).